A 385-amino-acid polypeptide reads, in one-letter code: Ribosomal RNA large subunit methyltransferase G (385 aa).

The protein belongs to the methyltransferase superfamily. RlmG family.

The protein resides in the cytoplasm. It carries out the reaction guanosine(1835) in 23S rRNA + S-adenosyl-L-methionine = N(2)-methylguanosine(1835) in 23S rRNA + S-adenosyl-L-homocysteine + H(+). Specifically methylates the guanine in position 1835 (m2G1835) of 23S rRNA. The sequence is that of Ribosomal RNA large subunit methyltransferase G from Vibrio parahaemolyticus serotype O3:K6 (strain RIMD 2210633).